A 544-amino-acid polypeptide reads, in one-letter code: Chaperonin GroEL (544 aa).

ATP is bound by residues 29-32 (TMGP), K50, 86-90 (DGTTT), G414, 477-479 (NAV), and D493.

The protein belongs to the chaperonin (HSP60) family. As to quaternary structure, forms a cylinder of 14 subunits composed of two heptameric rings stacked back-to-back. Interacts with the co-chaperonin GroES.

It localises to the cytoplasm. It carries out the reaction ATP + H2O + a folded polypeptide = ADP + phosphate + an unfolded polypeptide.. Together with its co-chaperonin GroES, plays an essential role in assisting protein folding. The GroEL-GroES system forms a nano-cage that allows encapsulation of the non-native substrate proteins and provides a physical environment optimized to promote and accelerate protein folding. The sequence is that of Chaperonin GroEL from Campylobacter curvus (strain 525.92).